The chain runs to 1463 residues: Chitin binding domain (ChtBD2) containing chtb-1 (1463 aa).

The N-terminal stretch at 1–17 (MLRNLILITLLVASGHG) is a signal peptide. The interval 70 to 99 (SSVPSVPAENTQPQQHPKARKPASPNICEQ) is disordered. In terms of domain architecture, Chitin-binding type-2 spans 94-164 (PNICEQDNGA…IVPKRMSSLS (71 aa)). An intrachain disulfide couples cysteine 141 to cysteine 154. 2 disordered regions span residues 720-773 (IDSD…DFPI) and 841-869 (KNPK…FPDS). Residues 722–734 (SDTNSTTNPSQPE) show a composition bias toward polar residues. Basic residues-rich tracts occupy residues 740–756 (NNTK…KPKK) and 843–853 (PKKRKTKRRKQ).

This Caenorhabditis elegans protein is Chitin binding domain (ChtBD2) containing chtb-1.